The chain runs to 163 residues: 2-C-methyl-D-erythritol 2,4-cyclodiphosphate synthase (163 aa).

Residues Asp-11 and His-13 each contribute to the a divalent metal cation site. Residues 11-13 (DIH) and 37-38 (HS) contribute to the 4-CDP-2-C-methyl-D-erythritol 2-phosphate site. His-45 is a binding site for a divalent metal cation. 4-CDP-2-C-methyl-D-erythritol 2-phosphate-binding positions include 59–61 (DIG), 64–68 (FSDTD), 103–109 (AQVPKMA), and Arg-145.

Belongs to the IspF family. As to quaternary structure, homotrimer. It depends on a divalent metal cation as a cofactor.

It carries out the reaction 4-CDP-2-C-methyl-D-erythritol 2-phosphate = 2-C-methyl-D-erythritol 2,4-cyclic diphosphate + CMP. It functions in the pathway isoprenoid biosynthesis; isopentenyl diphosphate biosynthesis via DXP pathway; isopentenyl diphosphate from 1-deoxy-D-xylulose 5-phosphate: step 4/6. Involved in the biosynthesis of isopentenyl diphosphate (IPP) and dimethylallyl diphosphate (DMAPP), two major building blocks of isoprenoid compounds. Catalyzes the conversion of 4-diphosphocytidyl-2-C-methyl-D-erythritol 2-phosphate (CDP-ME2P) to 2-C-methyl-D-erythritol 2,4-cyclodiphosphate (ME-CPP) with a corresponding release of cytidine 5-monophosphate (CMP). This is 2-C-methyl-D-erythritol 2,4-cyclodiphosphate synthase from Nitrosomonas europaea (strain ATCC 19718 / CIP 103999 / KCTC 2705 / NBRC 14298).